A 117-amino-acid chain; its full sequence is Ribonuclease P protein component (117 aa).

It belongs to the RnpA family. Consists of a catalytic RNA component (M1 or rnpB) and a protein subunit.

The enzyme catalyses Endonucleolytic cleavage of RNA, removing 5'-extranucleotides from tRNA precursor.. Its function is as follows. RNaseP catalyzes the removal of the 5'-leader sequence from pre-tRNA to produce the mature 5'-terminus. It can also cleave other RNA substrates such as 4.5S RNA. The protein component plays an auxiliary but essential role in vivo by binding to the 5'-leader sequence and broadening the substrate specificity of the ribozyme. In Thermotoga sp. (strain RQ2), this protein is Ribonuclease P protein component.